Consider the following 184-residue polypeptide: UPF0301 protein Rsph17029_2659 (184 aa).

Belongs to the UPF0301 (AlgH) family.

In Cereibacter sphaeroides (strain ATCC 17029 / ATH 2.4.9) (Rhodobacter sphaeroides), this protein is UPF0301 protein Rsph17029_2659.